We begin with the raw amino-acid sequence, 729 residues long: Fatty acid oxidation complex subunit alpha (729 aa).

Residues M1–K189 form an enoyl-CoA hydratase/isomerase region. D296 is a binding site for substrate. The tract at residues E311–A729 is 3-hydroxyacyl-CoA dehydrogenase. NAD(+) is bound by residues M324, D343, V400–E402, K407, and S429. Residue H450 is the For 3-hydroxyacyl-CoA dehydrogenase activity of the active site. N453 contributes to the NAD(+) binding site. Substrate contacts are provided by N500 and Y660. The disordered stretch occupies residues T707–A729.

The protein in the N-terminal section; belongs to the enoyl-CoA hydratase/isomerase family. This sequence in the C-terminal section; belongs to the 3-hydroxyacyl-CoA dehydrogenase family. As to quaternary structure, heterotetramer of two alpha chains (FadB) and two beta chains (FadA).

It carries out the reaction a (3S)-3-hydroxyacyl-CoA + NAD(+) = a 3-oxoacyl-CoA + NADH + H(+). The catalysed reaction is a (3S)-3-hydroxyacyl-CoA = a (2E)-enoyl-CoA + H2O. It catalyses the reaction a 4-saturated-(3S)-3-hydroxyacyl-CoA = a (3E)-enoyl-CoA + H2O. The enzyme catalyses (3S)-3-hydroxybutanoyl-CoA = (3R)-3-hydroxybutanoyl-CoA. It carries out the reaction a (3Z)-enoyl-CoA = a 4-saturated (2E)-enoyl-CoA. The catalysed reaction is a (3E)-enoyl-CoA = a 4-saturated (2E)-enoyl-CoA. It functions in the pathway lipid metabolism; fatty acid beta-oxidation. Its function is as follows. Involved in the aerobic and anaerobic degradation of long-chain fatty acids via beta-oxidation cycle. Catalyzes the formation of 3-oxoacyl-CoA from enoyl-CoA via L-3-hydroxyacyl-CoA. It can also use D-3-hydroxyacyl-CoA and cis-3-enoyl-CoA as substrate. The sequence is that of Fatty acid oxidation complex subunit alpha from Salmonella typhi.